The primary structure comprises 124 residues: Small ribosomal subunit protein uS13 (124 aa).

A compositionally biased stretch (basic residues) spans 93–117 (KNLPVRGQRTRTNARTRKGPRKTVA). The disordered stretch occupies residues 93–124 (KNLPVRGQRTRTNARTRKGPRKTVANKKIESK).

This sequence belongs to the universal ribosomal protein uS13 family. Part of the 30S ribosomal subunit. Forms a loose heterodimer with protein S19. Forms two bridges to the 50S subunit in the 70S ribosome.

Located at the top of the head of the 30S subunit, it contacts several helices of the 16S rRNA. In the 70S ribosome it contacts the 23S rRNA (bridge B1a) and protein L5 of the 50S subunit (bridge B1b), connecting the 2 subunits; these bridges are implicated in subunit movement. Contacts the tRNAs in the A and P-sites. The sequence is that of Small ribosomal subunit protein uS13 from Mycoplasma genitalium (strain ATCC 33530 / DSM 19775 / NCTC 10195 / G37) (Mycoplasmoides genitalium).